Here is a 226-residue protein sequence, read N- to C-terminus: Ribonuclease 3 (226 aa).

The RNase III domain maps to 6 to 128 (INRLQRKLGY…LIGGIFLDSD (123 aa)). Residue glutamate 41 coordinates Mg(2+). Aspartate 45 is an active-site residue. Positions 114 and 117 each coordinate Mg(2+). Glutamate 117 is a catalytic residue. The DRBM domain maps to 155 to 225 (DPKTRLQEYL…AEQALKQLEL (71 aa)).

The protein belongs to the ribonuclease III family. Homodimer. Mg(2+) serves as cofactor.

The protein resides in the cytoplasm. The enzyme catalyses Endonucleolytic cleavage to 5'-phosphomonoester.. Functionally, digests double-stranded RNA. Involved in the processing of primary rRNA transcript to yield the immediate precursors to the large and small rRNAs (23S and 16S). Processes some mRNAs, and tRNAs when they are encoded in the rRNA operon. Processes pre-crRNA and tracrRNA of type II CRISPR loci if present in the organism. The chain is Ribonuclease 3 from Yersinia enterocolitica serotype O:8 / biotype 1B (strain NCTC 13174 / 8081).